A 121-amino-acid polypeptide reads, in one-letter code: Small ribosomal subunit protein uS13 (121 aa).

Positions 91-121 are disordered; it reads HRRGLPVRGQNSKNNARTRKGPRRTVANKKK. Basic residues predominate over residues 106–121; it reads ARTRKGPRRTVANKKK.

This sequence belongs to the universal ribosomal protein uS13 family. As to quaternary structure, part of the 30S ribosomal subunit. Forms a loose heterodimer with protein S19. Forms two bridges to the 50S subunit in the 70S ribosome.

Functionally, located at the top of the head of the 30S subunit, it contacts several helices of the 16S rRNA. In the 70S ribosome it contacts the 23S rRNA (bridge B1a) and protein L5 of the 50S subunit (bridge B1b), connecting the 2 subunits; these bridges are implicated in subunit movement. Contacts the tRNAs in the A and P-sites. The sequence is that of Small ribosomal subunit protein uS13 from Bacillus cereus (strain AH187).